Consider the following 358-residue polypeptide: Gentisate 1,2-dioxygenase (358 aa).

The region spanning 99 to 165 (QYLGPREVAP…VTDEPMAWLD (67 aa)) is the Cupin type-2 domain. Residues 185 to 215 (DELSTRETPERSRGERLWGHPGLRPIGRPDQ) are disordered. Over residues 187 to 202 (LSTRETPERSRGERLW) the composition is skewed to basic and acidic residues.

It belongs to the gentisate 1,2-dioxygenase family.

The enzyme catalyses 2,5-dihydroxybenzoate + O2 = 3-maleylpyruvate + H(+). Involved in the degradation of salicylate via a pathway involving coenzyme A derivative. Catalyzes the oxygen-dependent ring fission of gentisate between the carboxyl and proximal hydroxyl groups at positions 1 and 2 of the aromatic ring to form maleylpyruvate. The substrate specificity is strong, since salicylate, catechol, protocatechuic acid, homogenetisate, 2,3-dihydroxybenzoate or 5-aminosalicylate cannot substitute for gentisate in the ring cleavage reaction. This Streptomyces sp protein is Gentisate 1,2-dioxygenase.